The sequence spans 319 residues: Forkhead box protein B1 (319 aa).

The segment at residues 13-107 (KPPYSYISLT…ENGSFLRRRK (95 aa)) is a DNA-binding region (fork-head). The tract at residues 278–310 (LSNSSPSMSPTSPQTATSQSSPATPSDTLTNPS) is disordered. Residues 279–305 (SNSSPSMSPTSPQTATSQSSPATPSDT) show a composition bias toward low complexity.

As to expression, in early gastrulae, expressed in the inner layer of the posterior dorsal ectoderm and in non-involuted mesoderm. By the mid-gastrula stage, expressed solely in the posterior ectoderm. At the end of gastrulation, expressed in ectodermal regions fated to become diencephalon, midbrain and hindbrain, and weakly expressed in regions fated to become spinal cord and tailbud. At the neurula stage, expressed in the midbrain and posterior forebrain (diencephalon) but not in the more anterior forebrain (telencephalon). Also expressed posteriorly in rhombomere 5. At tailbud stages, expression remains in the anterior brain and is also detectable along the length of the central nervous system and in the tailbud.

It is found in the nucleus. In terms of biological role, probable transcription factor. May be involved in the early anteroposterior patterning of the neuroectoderm. In Xenopus laevis (African clawed frog), this protein is Forkhead box protein B1.